The sequence spans 122 residues: Large ribosomal subunit protein uL14 (122 aa).

The protein belongs to the universal ribosomal protein uL14 family. As to quaternary structure, part of the 50S ribosomal subunit. Forms a cluster with proteins L3 and L19. In the 70S ribosome, L14 and L19 interact and together make contacts with the 16S rRNA in bridges B5 and B8.

Functionally, binds to 23S rRNA. Forms part of two intersubunit bridges in the 70S ribosome. In Methylobacillus flagellatus (strain ATCC 51484 / DSM 6875 / VKM B-1610 / KT), this protein is Large ribosomal subunit protein uL14.